The following is a 750-amino-acid chain: Cellulose synthase-like protein H1 (750 aa).

Helical transmembrane passes span 27–47 and 52–72; these read LAIL…DSGA and AALA…NAKW. Catalysis depends on residues aspartate 137 and aspartate 459. 6 consecutive transmembrane segments (helical) span residues 537 to 557, 570 to 590, 608 to 628, 664 to 684, 697 to 717, and 727 to 747; these read VWPV…YCLL, GFYI…MEFI, ITSA…TLGF, VFIP…VGAW, GPGI…MPLL, and GIPW…LLFC.

It belongs to the glycosyltransferase 2 family. Plant cellulose synthase-like H subfamily.

The protein resides in the golgi apparatus membrane. In terms of biological role, thought to be a Golgi-localized beta-glycan synthase that polymerize the backbones of noncellulosic polysaccharides (hemicelluloses) of plant cell wall. This Oryza sativa subsp. japonica (Rice) protein is Cellulose synthase-like protein H1 (CSLH1).